A 429-amino-acid polypeptide reads, in one-letter code: L-threonine dehydratase biosynthetic IlvA (429 aa).

Lys-66 carries the N6-(pyridoxal phosphate)lysine modification. Pyridoxal 5'-phosphate is bound by residues Asn-93, Gly-196 to Cys-200, and Ser-322. The ACT-like domain maps to His-346–Pro-420.

Belongs to the serine/threonine dehydratase family. As to quaternary structure, homotetramer. It depends on pyridoxal 5'-phosphate as a cofactor.

The catalysed reaction is L-threonine = 2-oxobutanoate + NH4(+). The protein operates within amino-acid biosynthesis; L-isoleucine biosynthesis; 2-oxobutanoate from L-threonine: step 1/1. Catalyzes the anaerobic formation of alpha-ketobutyrate and ammonia from threonine in a two-step reaction. The first step involved a dehydration of threonine and a production of enamine intermediates (aminocrotonate), which tautomerizes to its imine form (iminobutyrate). Both intermediates are unstable and short-lived. The second step is the nonenzymatic hydrolysis of the enamine/imine intermediates to form 2-ketobutyrate and free ammonia. In the low water environment of the cell, the second step is accelerated by RidA. The polypeptide is L-threonine dehydratase biosynthetic IlvA (ilvA) (Mycobacterium bovis (strain ATCC BAA-935 / AF2122/97)).